A 214-amino-acid chain; its full sequence is Probable transaldolase (214 aa).

Lys83 (schiff-base intermediate with substrate) is an active-site residue.

The protein belongs to the transaldolase family. Type 3B subfamily.

The protein localises to the cytoplasm. It catalyses the reaction D-sedoheptulose 7-phosphate + D-glyceraldehyde 3-phosphate = D-erythrose 4-phosphate + beta-D-fructose 6-phosphate. Its pathway is carbohydrate degradation; pentose phosphate pathway; D-glyceraldehyde 3-phosphate and beta-D-fructose 6-phosphate from D-ribose 5-phosphate and D-xylulose 5-phosphate (non-oxidative stage): step 2/3. In terms of biological role, transaldolase is important for the balance of metabolites in the pentose-phosphate pathway. The sequence is that of Probable transaldolase from Streptococcus pyogenes serotype M2 (strain MGAS10270).